A 609-amino-acid chain; its full sequence is UvrABC system protein C (609 aa).

One can recognise a GIY-YIG domain in the interval 13–91; it reads HQPGVYRMFD…IKAFQPRYNV (79 aa). The UVR domain maps to 201-236; sequence QQVLEHLIKKMEQASMQLNFEQAAYFRDQIQAIRAV.

The protein belongs to the UvrC family. Interacts with UvrB in an incision complex.

The protein localises to the cytoplasm. Functionally, the UvrABC repair system catalyzes the recognition and processing of DNA lesions. UvrC both incises the 5' and 3' sides of the lesion. The N-terminal half is responsible for the 3' incision and the C-terminal half is responsible for the 5' incision. The polypeptide is UvrABC system protein C (Histophilus somni (strain 129Pt) (Haemophilus somnus)).